The following is a 254-amino-acid chain: Pyrroloquinoline-quinone synthase (254 aa).

It belongs to the PqqC family.

It carries out the reaction 6-(2-amino-2-carboxyethyl)-7,8-dioxo-1,2,3,4,7,8-hexahydroquinoline-2,4-dicarboxylate + 3 O2 = pyrroloquinoline quinone + 2 H2O2 + 2 H2O + H(+). Its pathway is cofactor biosynthesis; pyrroloquinoline quinone biosynthesis. Ring cyclization and eight-electron oxidation of 3a-(2-amino-2-carboxyethyl)-4,5-dioxo-4,5,6,7,8,9-hexahydroquinoline-7,9-dicarboxylic-acid to PQQ. The polypeptide is Pyrroloquinoline-quinone synthase (Rhodopseudomonas palustris (strain ATCC BAA-98 / CGA009)).